Consider the following 374-residue polypeptide: Alpha-galactosylglucosyldiacylglycerol synthase (374 aa).

Belongs to the glycosyltransferase group 1 family. Glycosyltransferase 4 subfamily. Mg(2+) is required as a cofactor.

Its subcellular location is the cell membrane. It carries out the reaction a 1,2-diacyl-3-O-(alpha-D-glucopyranosyl)-sn-glycerol + UDP-alpha-D-galactose = a 1,2-diacyl-3-O-[alpha-D-galactopyranosyl-(1-&gt;2)-alpha-D-glucopyranosyl]-sn-glycerol + UDP + H(+). Its activity is regulated as follows. Activated by the negatively charged lipid phosphatidylglycerol (PG). Its function is as follows. Galactosyltransferase involved in the biosynthesis of the bilayer-forming membrane lipid alpha-galactosyl-glucosyldiacylglycerol which is involved in maintaining constant nonbilayer/bilayer conditions (curvature packing stress). Also involved in the beta-lactam resistance. Catalyzes the transfer of a galactosyl residue from UDP-Gal to alpha-glucosyl-DAG (1,2-diacyl-3-O-(alpha-D-glucopyranosyl)-sn-glycerol) acceptor to form the corresponding galactosyl-glycosyl-DAG product (3-O-alpha-(D-galactopyranosyl-alpha-(1-&gt;2)-D-glucopyranosyl)-1,2-diacyl-sn-glycerol). It can only use UDP-Gal as sugar donor and alpha-glucosyl-DAG is the preferred sugar acceptor. The chain is Alpha-galactosylglucosyldiacylglycerol synthase (cpoA) from Streptococcus pneumoniae (strain ATCC BAA-255 / R6).